Here is a 129-residue protein sequence, read N- to C-terminus: Snaclec rhodocetin subunit beta (129 aa).

The C-type lectin domain occupies 3–125 (RCPTTWSASK…EEKNAFLCKF (123 aa)). 3 disulfides stabilise this stretch: Cys-4–Cys-15, Cys-32–Cys-123, and Cys-98–Cys-115.

In terms of assembly, heterotetramer of subunit alpha, beta, gamma and delta; only the gamma and the delta subunits are disulfide-linked. Alpha-beta heterodimer and gamma-delta heterodimer associate orthogonally, giving a cruciform conformation. This heterotetramer may covalently dimerizes thanks to the gamma subunit. Expressed by the venom gland.

It is found in the secreted. Functionally, potent inhibitor of collagen-induced platelet aggregation. It acts by binding to the integrin alpha2A domain and blocks collagen binding to integrin alpha-2/beta-1 (ITGA2/ITGB1). The gamma/delta subunits mainly contribute to this activity. This chain is Snaclec rhodocetin subunit beta, found in Calloselasma rhodostoma (Malayan pit viper).